The primary structure comprises 251 residues: Sec-independent protein translocase protein TatC (251 aa).

6 helical membrane passes run 23-43, 73-93, 104-124, 159-179, 197-217, and 218-238; these read AFII…SFLL, SAFT…YLFI, IIAF…IFVF, LVIH…VIIV, IAVV…ILSQ, and FALA…CNFI.

It belongs to the TatC family. In terms of assembly, the Tat system comprises two distinct complexes: a TatABC complex, containing multiple copies of TatA, TatB and TatC subunits, and a separate TatA complex, containing only TatA subunits. Substrates initially bind to the TatABC complex, which probably triggers association of the separate TatA complex to form the active translocon.

The protein resides in the cell inner membrane. Part of the twin-arginine translocation (Tat) system that transports large folded proteins containing a characteristic twin-arginine motif in their signal peptide across membranes. Together with TatB, TatC is part of a receptor directly interacting with Tat signal peptides. This chain is Sec-independent protein translocase protein TatC, found in Rickettsia prowazekii (strain Madrid E).